The primary structure comprises 441 residues: Maltose-6'-phosphate glucosidase (441 aa).

4–70 is an NAD(+) binding site; the sequence is FSILIAGGGS…PQIKFSYSTN (67 aa). Substrate is bound by residues Arg-93 and Asn-147. Cys-169 serves as a coordination point for Mn(2+). Catalysis depends on Asp-170, which acts as the Proton donor. His-200 contributes to the Mn(2+) binding site. Catalysis depends on Tyr-264, which acts as the Proton acceptor. Residue Arg-284 participates in substrate binding.

Belongs to the glycosyl hydrolase 4 family. Homotetramer. Requires NAD(+) as cofactor. It depends on Mn(2+) as a cofactor. Fe(2+) serves as cofactor. The cofactor is Co(2+). Ni(2+) is required as a cofactor.

The catalysed reaction is alpha-maltose 6'-phosphate + H2O = D-glucose 6-phosphate + D-glucose. It participates in glycan degradation; maltose degradation. In terms of biological role, hydrolyzes a wide variety of 6-phospho-alpha-D-glucosides including maltose-6'P, trehalose-6P and the 6'-phosphorylated derivatives of the five linkage-isomeric alpha-D-glucosyl-D-fructoses: trehalulose-6'P, turanose-6'P, maltulose-6'P, leucrose-6'P, and palatinose-6'P. However, sucrose-6P is not a substrate for MalH, and this enzyme also fails to hydrolyze beta-O-linked phosphorylated disaccharides such as cellobiose-6'P and gentobiose-6'P. This chain is Maltose-6'-phosphate glucosidase (malH), found in Fusobacterium mortiferum.